The sequence spans 148 residues: Major microfilarial sheath protein (148 aa).

An N-terminal signal peptide occupies residues 1–18 (MCCKAILSFCILSSLGNA). A propeptide spans 19-43 (LYFGSHRPQYLREVGQRQYPFEPQA) (removed in mature form). 5 consecutive repeats follow at residues 46–50 (MLPVP), 54–58 (MGPQP), 59–63 (MGPQP), 64–68 (MEPQP), and 71–75 (MGPQS). Positions 46–75 (MLPVPQQPMGPQPMGPQPMEPQPLPMGPQS) are repeat-rich region. Positions 52-73 (QPMGPQPMGPQPMEPQPLPMGP) are enriched in pro residues. Residues 52 to 80 (QPMGPQPMGPQPMEPQPLPMGPQSPQMQV) form a disordered region.

The protein to B.pahangi filarial sheath protein. In terms of processing, O-glycosylated.

The protein is Major microfilarial sheath protein (GP22) of Litomosoides carinii.